Here is a 669-residue protein sequence, read N- to C-terminus: DNA ligase (669 aa).

Residues 31–35 (DAEYD), 80–81 (SL), and glutamate 112 contribute to the NAD(+) site. Lysine 114 functions as the N6-AMP-lysine intermediate in the catalytic mechanism. NAD(+) contacts are provided by arginine 135, glutamate 172, lysine 289, and lysine 313. Positions 407, 410, 425, and 431 each coordinate Zn(2+). The BRCT domain maps to 591–669 (SVPQPLADKV…EEQLIEILNN (79 aa)).

The protein belongs to the NAD-dependent DNA ligase family. LigA subfamily. Requires Mg(2+) as cofactor. Mn(2+) serves as cofactor.

It catalyses the reaction NAD(+) + (deoxyribonucleotide)n-3'-hydroxyl + 5'-phospho-(deoxyribonucleotide)m = (deoxyribonucleotide)n+m + AMP + beta-nicotinamide D-nucleotide.. Its function is as follows. DNA ligase that catalyzes the formation of phosphodiester linkages between 5'-phosphoryl and 3'-hydroxyl groups in double-stranded DNA using NAD as a coenzyme and as the energy source for the reaction. It is essential for DNA replication and repair of damaged DNA. This chain is DNA ligase, found in Aliivibrio salmonicida (strain LFI1238) (Vibrio salmonicida (strain LFI1238)).